We begin with the raw amino-acid sequence, 705 residues long: MGKDSQHYYGKHGTPQKYDPTFKGPIYNRGCTDIICCVLLFLAIVGYVAVGIIAWTHGDPRKVIYPTDSRGEFCGQKGTKNADKPFLFYFNIVKCASPLVLLEFHCPTPQICVKQCPDRYLTFLSARNSRDFDYYKQFCVPGFKNNKGVAEVLRDGECPAVIIPSKPLAQRCFPAIHASKGVLMVGNETTYEDGHGTRKNVTDLVEGAKKANKVLEARQLAMQIFEDYTVSWYWIVIGLVIAMLLSLMFIVLLRFLAGVMVWVMIVMVILVLGYGIFHCYAEYSRLRGEAGSDVSLVDLGFQTDLRVYLHLRQTWMAFMIILSILEVVIILLLIFLRKRILIAIALIKEASRAVGHVMCSMLYPLVTFFLLCLCIAYWASTSVFLSTSNVAVYKIVDDTPCPLLGKTCNPETFPLNESRQCPNGRCQFAFYGGESTYHRALLGLQIFNAFMFFWLANFVLALGQVTLAGAFASYYWAMRKPDDMPAFPLFSAFGRALRYHTGSLAFGSLILAIVQIIRVMLEYLDQRLKAAQNKFAKFLMVCLKCCFWCLEKFIKFLNRNAYIMIAIYGTNFCTSARNAFFLLMRNIIRVAVLDKVTDFLFLLGKLLIVGSVGILAFFFFTHRIRIVQDTAPPLNYYWVPILTVIIGSYLIAHGFFSVYGMCVDTLFLCFLEDLERNDGSAERPYFMSSTLKKLLNKTNKKVAES.

Residues 1–33 lie on the Cytoplasmic side of the membrane; sequence MGKDSQHYYGKHGTPQKYDPTFKGPIYNRGCTD. T14 bears the Phosphothreonine mark. The chain crosses the membrane as a helical span at residues 34-54; the sequence is IICCVLLFLAIVGYVAVGIIA. The Extracellular segment spans residues 55-232; sequence WTHGDPRKVI…QIFEDYTVSW (178 aa). N187 and N200 each carry an N-linked (GlcNAc...) asparagine glycan. Residues 233-253 traverse the membrane as a helical segment; sequence YWIVIGLVIAMLLSLMFIVLL. Residues 254–256 lie on the Cytoplasmic side of the membrane; it reads RFL. A helical membrane pass occupies residues 257–277; the sequence is AGVMVWVMIVMVILVLGYGIF. Residues 278-315 are Extracellular-facing; that stretch reads HCYAEYSRLRGEAGSDVSLVDLGFQTDLRVYLHLRQTW. Residues 316–336 form a helical membrane-spanning segment; that stretch reads MAFMIILSILEVVIILLLIFL. The Cytoplasmic portion of the chain corresponds to 337–364; it reads RKRILIAIALIKEASRAVGHVMCSMLYP. Residues 365 to 385 traverse the membrane as a helical segment; that stretch reads LVTFFLLCLCIAYWASTSVFL. At 386–453 the chain is on the extracellular side; that stretch reads STSNVAVYKI…LQIFNAFMFF (68 aa). Residue N416 is glycosylated (N-linked (GlcNAc...) asparagine). A helical transmembrane segment spans residues 454 to 476; that stretch reads WLANFVLALGQVTLAGAFASYYW. Topologically, residues 477 to 503 are cytoplasmic; sequence AMRKPDDMPAFPLFSAFGRALRYHTGS. A helical membrane pass occupies residues 504-524; the sequence is LAFGSLILAIVQIIRVMLEYL. The Extracellular segment spans residues 525-562; sequence DQRLKAAQNKFAKFLMVCLKCCFWCLEKFIKFLNRNAY. Residues 563–583 traverse the membrane as a helical segment; it reads IMIAIYGTNFCTSARNAFFLL. Topologically, residues 584–598 are cytoplasmic; that stretch reads MRNIIRVAVLDKVTD. The chain crosses the membrane as a helical span at residues 599–619; it reads FLFLLGKLLIVGSVGILAFFF. The Extracellular portion of the chain corresponds to 620 to 637; sequence FTHRIRIVQDTAPPLNYY. Residues 638–658 traverse the membrane as a helical segment; it reads WVPILTVIIGSYLIAHGFFSV. The Cytoplasmic segment spans residues 659 to 705; that stretch reads YGMCVDTLFLCFLEDLERNDGSAERPYFMSSTLKKLLNKTNKKVAES.

It belongs to the CTL (choline transporter-like) family. In terms of assembly, interacts with COCH. Post-translationally, N-glycosylated.

It is found in the cell membrane. The protein resides in the mitochondrion outer membrane. The catalysed reaction is choline(out) + n H(+)(in) = choline(in) + n H(+)(out). It carries out the reaction ethanolamine(out) + n H(+)(in) = ethanolamine(in) + n H(+)(out). In terms of biological role, exhibits choline transporter activity, as choline/H+ antiporter. Also acts as a low-affinity ethanolamine/H+ antiporter, regulating the supply of extracellular ethanolamine (Etn) for the CDP-Etn pathway, redistribute intracellular Etn and balance the CDP-Cho and CDP-Etn arms of the Kennedy pathway. The chain is Choline transporter-like protein 2 (Slc44a2) from Rattus norvegicus (Rat).